Here is a 650-residue protein sequence, read N- to C-terminus: Macrolide export ATP-binding/permease protein MacB (650 aa).

Positions 6 to 244 (LKLTGITRRF…ASSPEAASSP (239 aa)) constitute an ABC transporter domain. 42 to 49 (GASGSGKS) provides a ligand contact to ATP. Residues 227–246 (QTRPEEATASSPEAASSPAT) are disordered. The segment covering 233 to 246 (ATASSPEAASSPAT) has biased composition (low complexity). 4 helical membrane passes run 275–295 (FLTMLGIIIGIASVVSVVALG), 523–543 (LTLLVSMIALISLLVGGIGVM), 580–600 (LVCLFGGIAGVALSLAIGVLF), and 615–635 (SIIAAFLCSSLIGIIFGFFPA).

The protein belongs to the ABC transporter superfamily. Macrolide exporter (TC 3.A.1.122) family. In terms of assembly, homodimer. Part of the tripartite efflux system MacAB-TolC, which is composed of an inner membrane transporter, MacB, a periplasmic membrane fusion protein, MacA, and an outer membrane component, TolC. The complex forms a large protein conduit and can translocate molecules across both the inner and outer membranes. Interacts with MacA.

It localises to the cell inner membrane. Functionally, part of the tripartite efflux system MacAB-TolC. MacB is a non-canonical ABC transporter that contains transmembrane domains (TMD), which form a pore in the inner membrane, and an ATP-binding domain (NBD), which is responsible for energy generation. Confers resistance against macrolides. In Pectobacterium atrosepticum (strain SCRI 1043 / ATCC BAA-672) (Erwinia carotovora subsp. atroseptica), this protein is Macrolide export ATP-binding/permease protein MacB.